We begin with the raw amino-acid sequence, 474 residues long: Transcription termination factor Rho (474 aa).

A disordered region spans residues 1-60; the sequence is MTEELDNTPSPAGDIPQETLPKPLPAPEETAGEQPAAAPEENRGNAVREEEEAAPVLEQI. The 76-residue stretch at 107–182 folds into the Rho RNA-BD domain; that stretch reads EVVVSGVMEQ…ASVISVEDIP (76 aa). ATP-binding positions include 226 to 231, 238 to 243, and Arg-269; these read GKGQRG and RGGKTV.

This sequence belongs to the Rho family. As to quaternary structure, homohexamer. The homohexamer assembles into an open ring structure.

In terms of biological role, facilitates transcription termination by a mechanism that involves Rho binding to the nascent RNA, activation of Rho's RNA-dependent ATPase activity, and release of the mRNA from the DNA template. The polypeptide is Transcription termination factor Rho (Akkermansia muciniphila (strain ATCC BAA-835 / DSM 22959 / JCM 33894 / BCRC 81048 / CCUG 64013 / CIP 107961 / Muc)).